The sequence spans 308 residues: GATA transcription factor 10 (308 aa).

The segment at 214 to 268 (DGIVRICTHCETITTPQWRQGPSGPKTLCNACGVRFKSGRLVPEYRPASSPTFIP) adopts a GATA-type zinc-finger fold.

The protein belongs to the type IV zinc-finger family. Class A subfamily.

The protein resides in the nucleus. Functionally, transcriptional activator that specifically binds 5'-GATA-3' or 5'-GAT-3' motifs within gene promoters. May be involved in the regulation of some light-responsive genes. This Arabidopsis thaliana (Mouse-ear cress) protein is GATA transcription factor 10 (GATA10).